A 691-amino-acid polypeptide reads, in one-letter code: 1,4-alpha-glucan-branching enzyme (691 aa).

(1,4-alpha-D-glucosyl)n contacts are provided by W80 and K116. D333 functions as the Nucleophile in the catalytic mechanism. E398 serves as the catalytic Proton donor.

The protein belongs to the glycosyl hydrolase 13 family. GlgB subfamily.

The protein resides in the cytoplasm. The catalysed reaction is Transfers a segment of a (1-&gt;4)-alpha-D-glucan chain to a primary hydroxy group in a similar glucan chain.. It functions in the pathway glycan biosynthesis; glycogen biosynthesis. Functionally, glycogen-branching enzyme participates in the glycogen biosynthetic process along with glycogenin and glycogen synthase. Generates alpha-1,6-glucosidic branches from alpha-1,4-linked glucose chains, to increase solubility of the glycogen polymer. This Yarrowia lipolytica (strain CLIB 122 / E 150) (Yeast) protein is 1,4-alpha-glucan-branching enzyme (GLC3).